Here is a 187-residue protein sequence, read N- to C-terminus: Lipoprotein signal peptidase (187 aa).

3 helical membrane passes run 12-32 (VAVF…TKMW), 68-88 (MTWL…VLAV), and 91-111 (ISMK…GNLI). Active-site residues include Asp-127 and Asp-140. A helical transmembrane segment spans residues 141-161 (IFLMLAGVAAVLLLFLGEPFS). Positions 167-187 (EANGKTLGDDANATDDGAKAA) are disordered.

The protein belongs to the peptidase A8 family.

The protein localises to the cell membrane. It catalyses the reaction Release of signal peptides from bacterial membrane prolipoproteins. Hydrolyzes -Xaa-Yaa-Zaa-|-(S,diacylglyceryl)Cys-, in which Xaa is hydrophobic (preferably Leu), and Yaa (Ala or Ser) and Zaa (Gly or Ala) have small, neutral side chains.. The protein operates within protein modification; lipoprotein biosynthesis (signal peptide cleavage). Functionally, this protein specifically catalyzes the removal of signal peptides from prolipoproteins. The polypeptide is Lipoprotein signal peptidase (Bifidobacterium adolescentis (strain ATCC 15703 / DSM 20083 / NCTC 11814 / E194a)).